Consider the following 350-residue polypeptide: Uroporphyrinogen decarboxylase (350 aa).

Substrate contacts are provided by residues 28–32 (RQAGR), Asp78, Tyr155, Ser210, and His325.

It belongs to the uroporphyrinogen decarboxylase family. In terms of assembly, homodimer.

Its subcellular location is the cytoplasm. It catalyses the reaction uroporphyrinogen III + 4 H(+) = coproporphyrinogen III + 4 CO2. The protein operates within porphyrin-containing compound metabolism; protoporphyrin-IX biosynthesis; coproporphyrinogen-III from 5-aminolevulinate: step 4/4. Its function is as follows. Catalyzes the decarboxylation of four acetate groups of uroporphyrinogen-III to yield coproporphyrinogen-III. The sequence is that of Uroporphyrinogen decarboxylase from Trichormus variabilis (strain ATCC 29413 / PCC 7937) (Anabaena variabilis).